The following is a 127-amino-acid chain: Large ribosomal subunit protein eL8 (127 aa).

This sequence belongs to the eukaryotic ribosomal protein eL8 family. As to quaternary structure, part of the 50S ribosomal subunit. Probably part of the RNase P complex.

It localises to the cytoplasm. Its function is as follows. Multifunctional RNA-binding protein that recognizes the K-turn motif in ribosomal RNA, the RNA component of RNase P, box H/ACA, box C/D and box C'/D' sRNAs. This Hyperthermus butylicus (strain DSM 5456 / JCM 9403 / PLM1-5) protein is Large ribosomal subunit protein eL8.